A 258-amino-acid polypeptide reads, in one-letter code: Retron Ec83 putative HNH endonuclease (258 aa).

Putative HNH endonuclease component of antiviral defense system retron Ec83, composed of a non-coding RNA (ncRNA), a reverse transcriptase (RT), a probable ATPase and this protein. Expression of retron Ec78 confers protection against bacteriophage T2, T4 and T6. At multiplicity of infection (MOI) of 0.02 cultures slow growth when infected with T4 but do not collapse, at MOI 2 cultures enter growth stasis. The polypeptide is Retron Ec83 putative HNH endonuclease (Escherichia coli).